Consider the following 244-residue polypeptide: Aspartate/glutamate leucyltransferase (244 aa).

It belongs to the R-transferase family. Bpt subfamily.

The protein resides in the cytoplasm. The enzyme catalyses N-terminal L-glutamyl-[protein] + L-leucyl-tRNA(Leu) = N-terminal L-leucyl-L-glutamyl-[protein] + tRNA(Leu) + H(+). The catalysed reaction is N-terminal L-aspartyl-[protein] + L-leucyl-tRNA(Leu) = N-terminal L-leucyl-L-aspartyl-[protein] + tRNA(Leu) + H(+). Functionally, functions in the N-end rule pathway of protein degradation where it conjugates Leu from its aminoacyl-tRNA to the N-termini of proteins containing an N-terminal aspartate or glutamate. This chain is Aspartate/glutamate leucyltransferase, found in Bordetella parapertussis (strain 12822 / ATCC BAA-587 / NCTC 13253).